A 123-amino-acid polypeptide reads, in one-letter code: MVRATGSVASRSRRKRVLKQAKGFWGDRKGHFRQSRSSVMRAMAFNYMHRKDRKGDFRSLWITRLSVASRIHGLSYSRLINGLKQAGIHLNRKMLSEMAIHDPQGFAVVATQAKLALEAAVQG.

The protein belongs to the bacterial ribosomal protein bL20 family.

Its function is as follows. Binds directly to 23S ribosomal RNA and is necessary for the in vitro assembly process of the 50S ribosomal subunit. It is not involved in the protein synthesizing functions of that subunit. This chain is Large ribosomal subunit protein bL20 (rplT), found in Chlamydia trachomatis serovar D (strain ATCC VR-885 / DSM 19411 / UW-3/Cx).